The chain runs to 412 residues: Glucose-1-phosphate adenylyltransferase (412 aa).

Residues tyrosine 98, glycine 163, 178-179, and serine 189 contribute to the alpha-D-glucose 1-phosphate site; that span reads EK.

It belongs to the bacterial/plant glucose-1-phosphate adenylyltransferase family. Homotetramer.

The catalysed reaction is alpha-D-glucose 1-phosphate + ATP + H(+) = ADP-alpha-D-glucose + diphosphate. It participates in glycan biosynthesis; glycogen biosynthesis. Its function is as follows. Involved in the biosynthesis of ADP-glucose, a building block required for the elongation reactions to produce glycogen. Catalyzes the reaction between ATP and alpha-D-glucose 1-phosphate (G1P) to produce pyrophosphate and ADP-Glc. This Thermosipho africanus (strain TCF52B) protein is Glucose-1-phosphate adenylyltransferase.